A 305-amino-acid chain; its full sequence is tRNA dimethylallyltransferase (305 aa).

9–16 (GPTAVGKT) is a binding site for ATP. 11-16 (TAVGKT) contacts substrate. The interval 34-37 (DSRQ) is interaction with substrate tRNA.

The protein belongs to the IPP transferase family. In terms of assembly, monomer. It depends on Mg(2+) as a cofactor.

The catalysed reaction is adenosine(37) in tRNA + dimethylallyl diphosphate = N(6)-dimethylallyladenosine(37) in tRNA + diphosphate. Functionally, catalyzes the transfer of a dimethylallyl group onto the adenine at position 37 in tRNAs that read codons beginning with uridine, leading to the formation of N6-(dimethylallyl)adenosine (i(6)A). In Roseiflexus sp. (strain RS-1), this protein is tRNA dimethylallyltransferase.